The sequence spans 448 residues: MSFRSIVRDVRDGFGSLSRRSFEVTLASLYGLTGHHKGKTQSSLDELDDSPAIIPESRWASLPPELLREVIRRLEADESTWPSRRNVVCFAAVCRTWREMCKETVLSPEFCGKLTFPVSIKQPGPRDGMIQCYIKRNRSKSTYHLYLCLSNVVTAEGGKFVLAAKRHRKTTCTEYTISMVSGNISRSSRTNIGKLRSNFLGTKFIIYDTQPPYNGAVVPHVGRTSKRFNSTKVSPKVPSVTYNIAQVSYELNVLGTRGPRRMRCMMHSIPASSVEPGGIVPGQPEQIVPRALEDSFRSTTSFSQSFRSTTSFSKSIMDPSMDFSSARFSDISGSIMGGDDNGEIKERPLVLRNKPPRWHEQLQCWCLNFRGRVTIASVKNFQLVAAPSPPPAGAPTPSQPGPADPEKVILQFGKVARDMFTMDYRYPLSAFQAFAICLSSFDTKLACE.

One can recognise an F-box domain in the interval 56-102 (ESRWASLPPELLREVIRRLEADESTWPSRRNVVCFAAVCRTWREMCK). Residues 387–403 (PSPPPAGAPTPSQPGPA) show a composition bias toward pro residues. The disordered stretch occupies residues 387-406 (PSPPPAGAPTPSQPGPADPE).

Belongs to the TUB family. Expressed in roots, leaves, flowers and seeds.

In Oryza sativa subsp. japonica (Rice), this protein is Tubby-like F-box protein 3 (TULP3).